A 384-amino-acid chain; its full sequence is FAD-dependent urate hydroxylase (384 aa).

Residues Gly-11, 30-31, Ser-43, and Val-125 each bind FAD; that span reads EA. Residues Asn-178, Arg-204, and 216–218 each bind substrate; that span reads YFF. FAD contacts are provided by residues Asp-285 and 295-299; that span reads GQGGC.

Belongs to the FAD-dependent urate hydroxylase family. It depends on FAD as a cofactor.

The enzyme catalyses urate + NADH + O2 + H(+) = 5-hydroxyisourate + NAD(+) + H2O. It functions in the pathway purine metabolism; urate degradation. Its function is as follows. Catalyzes the hydroxylation of uric acid to 5-hydroxyisourate. The polypeptide is FAD-dependent urate hydroxylase (hpxO) (Klebsiella pneumoniae).